Consider the following 365-residue polypeptide: Sulfate/thiosulfate import ATP-binding protein CysA (365 aa).

An ABC transporter domain is found at Ile3–Met237. Gly35–Thr42 is a binding site for ATP.

The protein belongs to the ABC transporter superfamily. Sulfate/tungstate importer (TC 3.A.1.6) family. As to quaternary structure, the complex is composed of two ATP-binding proteins (CysA), two transmembrane proteins (CysT and CysW) and a solute-binding protein (CysP).

Its subcellular location is the cell inner membrane. It catalyses the reaction sulfate(out) + ATP + H2O = sulfate(in) + ADP + phosphate + H(+). It carries out the reaction thiosulfate(out) + ATP + H2O = thiosulfate(in) + ADP + phosphate + H(+). Part of the ABC transporter complex CysAWTP involved in sulfate/thiosulfate import. Responsible for energy coupling to the transport system. In Escherichia coli O6:H1 (strain CFT073 / ATCC 700928 / UPEC), this protein is Sulfate/thiosulfate import ATP-binding protein CysA.